Here is a 259-residue protein sequence, read N- to C-terminus: Adenosylcobinamide-GDP ribazoletransferase (259 aa).

Transmembrane regions (helical) follow at residues I27–I47, F51–N71, V100–A120, L124–I144, F175–A195, and V219–A239.

Belongs to the CobS family. Requires Mg(2+) as cofactor.

It is found in the cell membrane. The catalysed reaction is alpha-ribazole + adenosylcob(III)inamide-GDP = adenosylcob(III)alamin + GMP + H(+). It carries out the reaction alpha-ribazole 5'-phosphate + adenosylcob(III)inamide-GDP = adenosylcob(III)alamin 5'-phosphate + GMP + H(+). It functions in the pathway cofactor biosynthesis; adenosylcobalamin biosynthesis; adenosylcobalamin from cob(II)yrinate a,c-diamide: step 7/7. Joins adenosylcobinamide-GDP and alpha-ribazole to generate adenosylcobalamin (Ado-cobalamin). Also synthesizes adenosylcobalamin 5'-phosphate from adenosylcobinamide-GDP and alpha-ribazole 5'-phosphate. The sequence is that of Adenosylcobinamide-GDP ribazoletransferase from Thermoplasma volcanium (strain ATCC 51530 / DSM 4299 / JCM 9571 / NBRC 15438 / GSS1).